The primary structure comprises 401 residues: Imidazolonepropionase (401 aa).

Fe(3+)-binding residues include His66 and His68. Positions 66 and 68 each coordinate Zn(2+). The 4-imidazolone-5-propanoate site is built by Arg75, Tyr138, and His171. Tyr138 provides a ligand contact to N-formimidoyl-L-glutamate. Residue His236 participates in Fe(3+) binding. His236 provides a ligand contact to Zn(2+). Gln239 contributes to the 4-imidazolone-5-propanoate binding site. Asp311 contacts Fe(3+). Asp311 contributes to the Zn(2+) binding site. N-formimidoyl-L-glutamate-binding residues include Asn313 and Gly315. Thr316 contributes to the 4-imidazolone-5-propanoate binding site.

It belongs to the metallo-dependent hydrolases superfamily. HutI family. The cofactor is Zn(2+). It depends on Fe(3+) as a cofactor.

The protein localises to the cytoplasm. The catalysed reaction is 4-imidazolone-5-propanoate + H2O = N-formimidoyl-L-glutamate. Its pathway is amino-acid degradation; L-histidine degradation into L-glutamate; N-formimidoyl-L-glutamate from L-histidine: step 3/3. In terms of biological role, catalyzes the hydrolytic cleavage of the carbon-nitrogen bond in imidazolone-5-propanoate to yield N-formimidoyl-L-glutamate. It is the third step in the universal histidine degradation pathway. The polypeptide is Imidazolonepropionase (Pseudomonas putida (strain GB-1)).